Reading from the N-terminus, the 138-residue chain is UPF0201 protein PYRAB09730 (138 aa).

Belongs to the UPF0201 family.

This is UPF0201 protein PYRAB09730 from Pyrococcus abyssi (strain GE5 / Orsay).